The primary structure comprises 571 residues: Proline--tRNA ligase (571 aa).

It belongs to the class-II aminoacyl-tRNA synthetase family. ProS type 1 subfamily. As to quaternary structure, homodimer.

Its subcellular location is the cytoplasm. It catalyses the reaction tRNA(Pro) + L-proline + ATP = L-prolyl-tRNA(Pro) + AMP + diphosphate. Catalyzes the attachment of proline to tRNA(Pro) in a two-step reaction: proline is first activated by ATP to form Pro-AMP and then transferred to the acceptor end of tRNA(Pro). As ProRS can inadvertently accommodate and process non-cognate amino acids such as alanine and cysteine, to avoid such errors it has two additional distinct editing activities against alanine. One activity is designated as 'pretransfer' editing and involves the tRNA(Pro)-independent hydrolysis of activated Ala-AMP. The other activity is designated 'posttransfer' editing and involves deacylation of mischarged Ala-tRNA(Pro). The misacylated Cys-tRNA(Pro) is not edited by ProRS. This Shewanella frigidimarina (strain NCIMB 400) protein is Proline--tRNA ligase.